We begin with the raw amino-acid sequence, 404 residues long: DNA gyrase subunit B (404 aa).

Positions 321 to 404 (SEIYIVEGDS…VIIMTDADVD (84 aa)) constitute a Toprim domain. Residues glutamate 327, aspartate 400, and aspartate 402 each contribute to the Mg(2+) site.

The protein belongs to the type II topoisomerase GyrB family. Heterotetramer, composed of two GyrA and two GyrB chains. In the heterotetramer, GyrA contains the active site tyrosine that forms a transient covalent intermediate with DNA, while GyrB binds cofactors and catalyzes ATP hydrolysis. Mg(2+) serves as cofactor. Mn(2+) is required as a cofactor. It depends on Ca(2+) as a cofactor.

It localises to the cytoplasm. It catalyses the reaction ATP-dependent breakage, passage and rejoining of double-stranded DNA.. In terms of biological role, a type II topoisomerase that negatively supercoils closed circular double-stranded (ds) DNA in an ATP-dependent manner to modulate DNA topology and maintain chromosomes in an underwound state. Negative supercoiling favors strand separation, and DNA replication, transcription, recombination and repair, all of which involve strand separation. Also able to catalyze the interconversion of other topological isomers of dsDNA rings, including catenanes and knotted rings. Type II topoisomerases break and join 2 DNA strands simultaneously in an ATP-dependent manner. The polypeptide is DNA gyrase subunit B (gyrB) (Bacillus cereus).